We begin with the raw amino-acid sequence, 119 residues long: Dolichyl-diphosphooligosaccharide--protein glycosyltransferase subunit DAD1 (119 aa).

An N-acetylserine modification is found at S2. Residues 2–30 are Cytoplasmic-facing; it reads SASVASVISRFLEEYLSSTPQRLKLLDAY. Residues 31–51 traverse the membrane as a helical segment; sequence LLYILLTGALQFGYCLLVGTF. The Lumenal segment spans residues 52-54; sequence PFN. Residues 55 to 75 form a helical membrane-spanning segment; it reads SFLSGFISCVGSFILAGNGSL. Residues 76 to 81 are Cytoplasmic-facing; it reads RNRSNN. A helical membrane pass occupies residues 82–98; the sequence is VFTLVRCFSSLVTLFYS. The Lumenal portion of the chain corresponds to 99-119; that stretch reads RSPPREVPRGACIALFCERGN.

It belongs to the DAD/OST2 family. In terms of assembly, component of the oligosaccharyltransferase (OST) complex. OST exists in two different complex forms which contain common core subunits RPN1, RPN2, OST48, OST4, DAD1 and TMEM258, either STT3A or STT3B as catalytic subunits, and form-specific accessory subunits. STT3A complex assembly occurs through the formation of 3 subcomplexes. Subcomplex 1 contains RPN1 and TMEM258, subcomplex 2 contains the STT3A-specific subunits STT3A, DC2/OSTC, and KCP2 as well as the core subunit OST4, and subcomplex 3 contains RPN2, DAD1, and OST48. The STT3A complex can form stable complexes with the Sec61 complex or with both the Sec61 and TRAP complexes.

The protein localises to the endoplasmic reticulum membrane. It participates in protein modification; protein glycosylation. Its function is as follows. Subunit of the oligosaccharyl transferase (OST) complex that catalyzes the initial transfer of a defined glycan (Glc(3)Man(9)GlcNAc(2) in eukaryotes) from the lipid carrier dolichol-pyrophosphate to an asparagine residue within an Asn-X-Ser/Thr consensus motif in nascent polypeptide chains, the first step in protein N-glycosylation. N-glycosylation occurs cotranslationally and the complex associates with the Sec61 complex at the channel-forming translocon complex that mediates protein translocation across the endoplasmic reticulum (ER). All subunits are required for a maximal enzyme activity. The sequence is that of Dolichyl-diphosphooligosaccharide--protein glycosyltransferase subunit DAD1 from Canis lupus familiaris (Dog).